The sequence spans 967 residues: RNA polymerase-associated protein RapA (967 aa).

The 171-residue stretch at 163-333 (EVGQRHAPRV…FARLRLLDPN (171 aa)) folds into the Helicase ATP-binding domain. An ATP-binding site is contributed by 176–183 (DEVGLGKT). Positions 279–282 (DEAH) match the DEAH box motif. Residues 489 to 677 (RVEWLLNYLT…TCRQQHDSLK (189 aa)) enclose the Helicase C-terminal domain.

The protein belongs to the SNF2/RAD54 helicase family. RapA subfamily. As to quaternary structure, interacts with the RNAP. Has a higher affinity for the core RNAP than for the holoenzyme. Its ATPase activity is stimulated by binding to RNAP.

Its function is as follows. Transcription regulator that activates transcription by stimulating RNA polymerase (RNAP) recycling in case of stress conditions such as supercoiled DNA or high salt concentrations. Probably acts by releasing the RNAP, when it is trapped or immobilized on tightly supercoiled DNA. Does not activate transcription on linear DNA. Probably not involved in DNA repair. The polypeptide is RNA polymerase-associated protein RapA (Pectobacterium atrosepticum (strain SCRI 1043 / ATCC BAA-672) (Erwinia carotovora subsp. atroseptica)).